Consider the following 320-residue polypeptide: SPX domain-containing protein 4 (320 aa).

The SPX domain occupies 1–170 (MKFGKDFRSH…GGLLSLPFTQ (170 aa)). Disordered regions lie at residues 209-233 (SSSA…VDVE) and 275-320 (CSGA…PRDE). Residues 278–289 (AITSESDSYSDS) show a composition bias toward polar residues. Positions 290–299 (QIEDAEDDDK) are enriched in acidic residues. The span at 304 to 313 (REQNTAQNAA) shows a compositional bias: polar residues.

Homodimer. Interacts (via N-terminus) with PHR2 (via C-terminus) in the presence of inositol polyphosphate. Interacts with BHLH6. Degraded under Pi starvation conditions through the ubiquitin/26S proteasome pathway. Widely expressed. Detected in root cells, with the exception of epidermis, and in mesophyll and vascular bundles in leaves.

Its subcellular location is the membrane. The protein resides in the nucleus. It localises to the cytoplasm. Functionally, inositol polyphosphate sensor that associates with transcription factors to regulate Pi starvation responses. The SPX domain provides a basic binding surface for inositol polyphosphate signaling molecules. Interacts with PHR2 to inhibit its translocation to the nucleus and repress its DNA-binding activity, and then negatively regulate Pi signaling. This is SPX domain-containing protein 4 from Oryza sativa subsp. japonica (Rice).